The following is a 785-amino-acid chain: MLVAGLLLWASLLTGAWPSFPTQDHLPATPRVRLSFKELKATGTAHFFNFLLNTTDYRILLKDEDHDRMYVGSKDYVLSLDLHDINREPLIIHWAASPQRIEECVLSGKDVNGECGNFVRLIQPWNRTHLYVCGTGAYNPMCTYVNRGRRAQATPWTQTQAVRGRGSRATDGALRPMPTAPRQDYIFYLEPERLESGKGKCPYDPKLDTASALINEELYAGVYIDFMGTDAAIFRTLGKQTAMRTDQYNSRWLNDPSFIHAELIPDSAERNDDKLYFFFRERSAEAPQSPAVYARIGRICLNDDGGHCCLVNKWSTFLKARLVCSVPGEDGIETHFDELQDVFVQQTQDVRNPVIYAVFTSSGSVFRGSAVCVYSMADIRMVFNGPFAHKEGPNYQWMPFSGKMPYPRPGTCPGGTFTPSMKSTKDYPDEVINFMRSHPLMYQAVYPLQRRPLVVRTGAPYRLTTIAVDQVDAADGRYEVLFLGTDRGTVQKVIVLPKDDQELEELMLEEVEVFKDPAPVKTMTISSKRQQLYVASAVGVTHLSLHRCQAYGAACADCCLARDPYCAWDGQACSRYTASSKRRSRRQDVRHGNPIRQCRGFNSNANKNAVESVQYGVAGSAAFLECQPRSPQATVKWLFQRDPGDRRREIRAEDRFLRTEQGLLLRALQLSDRGLYSCTATENNFKHVVTRVQLHVLGRDAVHAALFPPLSMSAPPPPGAGPPTPPYQELAQLLAQPEVGLIHQYCQGYWRHVPPSPREAPGAPRSPEPQDQKKPRNRRHHPPDT.

The signal sequence occupies residues 1 to 18 (MLVAGLLLWASLLTGAWP). The region spanning 31–545 (RVRLSFKELK…SAVGVTHLSL (515 aa)) is the Sema domain. Asn53 is a glycosylation site (N-linked (GlcNAc...) asparagine). Cys104 and Cys115 are joined by a disulfide. Asn126 carries N-linked (GlcNAc...) asparagine glycosylation. Cystine bridges form between Cys133–Cys142, Cys300–Cys412, Cys324–Cys372, Cys548–Cys566, and Cys678–Cys746. An Ig-like C2-type domain is found at 605–690 (ANKNAVESVQ…TENNFKHVVT (86 aa)). Residues 752-785 (HVPPSPREAPGAPRSPEPQDQKKPRNRRHHPPDT) form a disordered region. The segment covering 775-785 (PRNRRHHPPDT) has biased composition (basic residues).

It belongs to the semaphorin family. Expressed abundantly but differentially in a variety of neural and nonneural tissues. There is high expression in mammary gland, kidney, fetal brain, and lung and lower expression in heart and liver.

Its subcellular location is the secreted. Functionally, may play a role in cell motility and cell adhesion. This chain is Semaphorin-3F (SEMA3F), found in Homo sapiens (Human).